Reading from the N-terminus, the 388-residue chain is Formate-dependent phosphoribosylglycinamide formyltransferase (388 aa).

N(1)-(5-phospho-beta-D-ribosyl)glycinamide is bound by residues 11–12 and Glu-71; that span reads EL. ATP-binding positions include Arg-103, Lys-144, 149–154, 184–187, and Glu-192; these read SSGKGQ and EEFI. One can recognise an ATP-grasp domain in the interval 108–300; the sequence is DLAAKELGLK…EFELHLRAVL (193 aa). The Mg(2+) site is built by Glu-257 and Glu-270. N(1)-(5-phospho-beta-D-ribosyl)glycinamide is bound by residues Asp-277, Lys-349, and 356–357; that span reads RR.

This sequence belongs to the PurK/PurT family. In terms of assembly, homodimer.

The catalysed reaction is N(1)-(5-phospho-beta-D-ribosyl)glycinamide + formate + ATP = N(2)-formyl-N(1)-(5-phospho-beta-D-ribosyl)glycinamide + ADP + phosphate + H(+). Its pathway is purine metabolism; IMP biosynthesis via de novo pathway; N(2)-formyl-N(1)-(5-phospho-D-ribosyl)glycinamide from N(1)-(5-phospho-D-ribosyl)glycinamide (formate route): step 1/1. Functionally, involved in the de novo purine biosynthesis. Catalyzes the transfer of formate to 5-phospho-ribosyl-glycinamide (GAR), producing 5-phospho-ribosyl-N-formylglycinamide (FGAR). Formate is provided by PurU via hydrolysis of 10-formyl-tetrahydrofolate. This chain is Formate-dependent phosphoribosylglycinamide formyltransferase, found in Bacteroides thetaiotaomicron (strain ATCC 29148 / DSM 2079 / JCM 5827 / CCUG 10774 / NCTC 10582 / VPI-5482 / E50).